The primary structure comprises 450 residues: MDSDTLRVFQNELICCICVNYFIDPVTTDCVHSFCRPCLCLCSEEGRAPMRCPLCRKISEKPNFNTNVALKKLASLARQTRPQNINSSDNICVLHEETKELFCEADKRLLCGPCSESPEHMAHSHSPIGWAAEECRVQKLIKEMDYLWKINQETQNNLNQETSKFCSLVDYVSLRKVIITIQYQKMHIFLDEEEQRHLQALEREAKELFQQLQDSQVRMTQHLEGMKDMYRELWETYHMPDVELLQDVGNISARTDLAQMPKPQPVNPELTSWCITGVLDMLNNFRVDNALSTEMTPCYISLSEDVRRVIFGDDHRSAPMDPQGVESFAVWCAQAFTSGKHYWEVDVTHSSNWILGVCRDSRTADTNIVIDSDKTFFSISSKTSNHYSLSTNSPPLIQYVQRPLGWVGVFLDYDNGSVSFFDVSKGSLIYGFPPSSFSSPLRPFFCFGCT.

The RING-type zinc-finger motif lies at 15–56 (CCICVNYFIDPVTTDCVHSFCRPCLCLCSEEGRAPMRCPLCR). The segment at 87–128 (SSDNICVLHEETKELFCEADKRLLCGPCSESPEHMAHSHSPI) adopts a B box-type zinc-finger fold. Zn(2+)-binding residues include Cys92, His95, Cys114, and His120. Residues 191 to 218 (DEEEQRHLQALEREAKELFQQLQDSQVR) adopt a coiled-coil conformation. The 182-residue stretch at 269–450 (ELTSWCITGV…LRPFFCFGCT (182 aa)) folds into the B30.2/SPRY domain.

The protein belongs to the TRIM/RBCC family.

The protein is Tripartite motif-containing protein 64C (TRIM64C) of Homo sapiens (Human).